Here is a 350-residue protein sequence, read N- to C-terminus: GTPase Obg (350 aa).

One can recognise an Obg domain in the interval 1 to 159 (MKLVDEAEIE…RTLKLELKLL (159 aa)). The tract at residues 127-147 (NMHFKSSTNRSPRQALPGEPG) is disordered. Residues 160–337 (ADVGLLGFPN…IMSRIMAFFD (178 aa)) form the OBG-type G domain. GTP-binding positions include 166-173 (GFPNAGKS), 191-195 (FTTLY), 213-216 (DIPG), 287-290 (NKAD), and 318-320 (SAL). The Mg(2+) site is built by Ser173 and Thr193.

It belongs to the TRAFAC class OBG-HflX-like GTPase superfamily. OBG GTPase family. Monomer. It depends on Mg(2+) as a cofactor.

It localises to the cytoplasm. An essential GTPase which binds GTP, GDP and possibly (p)ppGpp with moderate affinity, with high nucleotide exchange rates and a fairly low GTP hydrolysis rate. Plays a role in control of the cell cycle, stress response, ribosome biogenesis and in those bacteria that undergo differentiation, in morphogenesis control. This Stenotrophomonas maltophilia (strain R551-3) protein is GTPase Obg.